We begin with the raw amino-acid sequence, 225 residues long: Protein-L-isoaspartate O-methyltransferase (225 aa).

Ser-75 is an active-site residue.

The protein belongs to the methyltransferase superfamily. L-isoaspartyl/D-aspartyl protein methyltransferase family.

Its subcellular location is the cytoplasm. The enzyme catalyses [protein]-L-isoaspartate + S-adenosyl-L-methionine = [protein]-L-isoaspartate alpha-methyl ester + S-adenosyl-L-homocysteine. Catalyzes the methyl esterification of L-isoaspartyl residues in peptides and proteins that result from spontaneous decomposition of normal L-aspartyl and L-asparaginyl residues. It plays a role in the repair and/or degradation of damaged proteins. This Xanthomonas euvesicatoria pv. vesicatoria (strain 85-10) (Xanthomonas campestris pv. vesicatoria) protein is Protein-L-isoaspartate O-methyltransferase.